A 347-amino-acid chain; its full sequence is MDYKTSGVDIEAGREFVSEIKQAVEGTHTSNVIEGIGGFGGLFRIPIDSFKKPVLVSGTDGVGTKLELAQSKNFHFEVGIDLVAMCINDIITSGAKPLFFLDYIATGKLDKKQLLRVVQGISHGCGENNCSLLGGETAEMPGFYSKNKYDLAGFCVGIVDEDKLINGKKVSENDLIIALKSNGVHSNGFSLVRKIIQNNNQIEKEFEKVSHLSFYDELLKPTKIYNNVIGQILSEDIEIKAMSHITGGGIPENLPRCIPSDFIPYINTNSWEIPILFEFLKKIGSIPEKDFWNTFNLGVGFCLIIDKQFKDRIYNICKDHDIDSWEIGKIVRKDNATISKFLPEILT.

It belongs to the AIR synthase family.

It localises to the cytoplasm. The catalysed reaction is 2-formamido-N(1)-(5-O-phospho-beta-D-ribosyl)acetamidine + ATP = 5-amino-1-(5-phospho-beta-D-ribosyl)imidazole + ADP + phosphate + H(+). The protein operates within purine metabolism; IMP biosynthesis via de novo pathway; 5-amino-1-(5-phospho-D-ribosyl)imidazole from N(2)-formyl-N(1)-(5-phospho-D-ribosyl)glycinamide: step 2/2. The protein is Phosphoribosylformylglycinamidine cyclo-ligase of Prochlorococcus marinus (strain MIT 9215).